We begin with the raw amino-acid sequence, 499 residues long: Probable cytosol aminopeptidase (499 aa).

Lysine 263 and aspartate 268 together coordinate Mn(2+). The active site involves lysine 275. Mn(2+) is bound by residues aspartate 286, aspartate 345, and glutamate 347. Arginine 349 is an active-site residue.

It belongs to the peptidase M17 family. Mn(2+) serves as cofactor.

The protein localises to the cytoplasm. The catalysed reaction is Release of an N-terminal amino acid, Xaa-|-Yaa-, in which Xaa is preferably Leu, but may be other amino acids including Pro although not Arg or Lys, and Yaa may be Pro. Amino acid amides and methyl esters are also readily hydrolyzed, but rates on arylamides are exceedingly low.. It catalyses the reaction Release of an N-terminal amino acid, preferentially leucine, but not glutamic or aspartic acids.. Presumably involved in the processing and regular turnover of intracellular proteins. Catalyzes the removal of unsubstituted N-terminal amino acids from various peptides. The chain is Probable cytosol aminopeptidase (pepA) from Chlamydia trachomatis serovar D (strain ATCC VR-885 / DSM 19411 / UW-3/Cx).